Reading from the N-terminus, the 398-residue chain is Glucose-1-phosphate adenylyltransferase (398 aa).

Alpha-D-glucose 1-phosphate-binding positions include Y100, G165, 180 to 181 (EK), and S191.

It belongs to the bacterial/plant glucose-1-phosphate adenylyltransferase family. As to quaternary structure, homotetramer.

It catalyses the reaction alpha-D-glucose 1-phosphate + ATP + H(+) = ADP-alpha-D-glucose + diphosphate. The protein operates within glycan biosynthesis; glycogen biosynthesis. Its function is as follows. Involved in the biosynthesis of ADP-glucose, a building block required for the elongation reactions to produce glycogen. Catalyzes the reaction between ATP and alpha-D-glucose 1-phosphate (G1P) to produce pyrophosphate and ADP-Glc. The polypeptide is Glucose-1-phosphate adenylyltransferase (Desulfitobacterium hafniense (strain DSM 10664 / DCB-2)).